The chain runs to 188 residues: Small ribosomal subunit protein bS16 (188 aa).

The tract at residues 155–188 is disordered; the sequence is IAAASATEEAATEEVAEAAEEAPAAEENNETTEA. Over residues 164–188 the composition is skewed to acidic residues; sequence AATEEVAEAAEEAPAAEENNETTEA.

Belongs to the bacterial ribosomal protein bS16 family.

This Flavobacterium johnsoniae (strain ATCC 17061 / DSM 2064 / JCM 8514 / BCRC 14874 / CCUG 350202 / NBRC 14942 / NCIMB 11054 / UW101) (Cytophaga johnsonae) protein is Small ribosomal subunit protein bS16.